A 307-amino-acid chain; its full sequence is Glutaminase (307 aa).

7 residues coordinate substrate: Ser-66, Asn-116, Glu-160, Asn-167, Tyr-191, Tyr-243, and Val-261.

This sequence belongs to the glutaminase family. Homotetramer.

The enzyme catalyses L-glutamine + H2O = L-glutamate + NH4(+). In Saccharophagus degradans (strain 2-40 / ATCC 43961 / DSM 17024), this protein is Glutaminase.